The chain runs to 92 residues: Small ribosomal subunit protein uS19 (92 aa).

It belongs to the universal ribosomal protein uS19 family.

Protein S19 forms a complex with S13 that binds strongly to the 16S ribosomal RNA. The polypeptide is Small ribosomal subunit protein uS19 (Gloeobacter violaceus (strain ATCC 29082 / PCC 7421)).